We begin with the raw amino-acid sequence, 292 residues long: Ribosomal protein L11 methyltransferase (292 aa).

The S-adenosyl-L-methionine site is built by T136, G159, D181, and N228.

The protein belongs to the methyltransferase superfamily. PrmA family.

It localises to the cytoplasm. It catalyses the reaction L-lysyl-[protein] + 3 S-adenosyl-L-methionine = N(6),N(6),N(6)-trimethyl-L-lysyl-[protein] + 3 S-adenosyl-L-homocysteine + 3 H(+). In terms of biological role, methylates ribosomal protein L11. The protein is Ribosomal protein L11 methyltransferase of Rhizobium rhizogenes (strain K84 / ATCC BAA-868) (Agrobacterium radiobacter).